Reading from the N-terminus, the 141-residue chain is Period circadian protein (141 aa).

The tract at residues 1–141 (EGSGGSGSSG…VTLTESLLNK (141 aa)) is disordered. Residues 11–23 (HFTTGSNVHMSSV) show a composition bias toward polar residues. Over residues 29–68 (GGTGGTGTGTGTGTGTGTGTGTGTGTGTGTGTGTGTGTGT) the composition is skewed to gly residues. 19 consecutive repeat copies span residues 30–31 (GT), 33–34 (GT), 35–36 (GT), 37–38 (GT), 39–40 (GT), 41–42 (GT), 43–44 (GT), 45–46 (GT), 47–48 (GT), 49–50 (GT), 51–52 (GT), 53–54 (GT), 55–56 (GT), 57–58 (GT), 59–60 (GT), 61–62 (GT), 63–64 (GT), 65–66 (GT), and 67–68 (GT). A 32 X 2 AA approximate tandem repeats of G-T region spans residues 30 to 94 (GTGGTGTGTG…ANGTGTGKGT (65 aa)). One copy of the 20; approximate repeat lies at 69 to 70 (AS). A compositionally biased stretch (low complexity) spans 69–85 (ASGTATGTASGTATGTA). The stretch at 71-72 (GT) is repeat 21. A 22; approximate repeat occupies 73 to 74 (AT). Repeat unit 23 spans residues 75–76 (GT). The stretch at 77–78 (AS) is one 24; approximate repeat. Residues 79 to 80 (GT) form repeat 25. One copy of the 26; approximate repeat lies at 81–82 (AT). Copy 27 of the repeat occupies 83–84 (GT). The stretch at 85-86 (AN) is one 28; approximate repeat. Repeat copies occupy residues 87-88 (GT) and 89-90 (GT). The 31; approximate repeat unit spans residues 91 to 92 (GK). The stretch at 93 to 94 (GT) is repeat 32. Gly residues predominate over residues 101–113 (SGSGSGTGTGTGT). A compositionally biased stretch (low complexity) spans 114–129 (GTTTTTTTGNNSSSST). Polar residues predominate over residues 130-141 (PPVTLTESLLNK).

As to quaternary structure, forms a heterodimer with timeless (TIM); the complex then translocates into the nucleus. Phosphorylated with a circadian rhythmicity, probably by the double-time protein (dbt). Phosphorylation could be implicated in the stability of per monomer and in the formation of heterodimer per-tim.

The protein localises to the nucleus. The protein resides in the cytoplasm. Its subcellular location is the perinuclear region. Functionally, essential for biological clock functions. Determines the period length of circadian and ultradian rhythms; an increase in PER dosage leads to shortened circadian rhythms and a decrease leads to lengthened circadian rhythms. Essential for the circadian rhythmicity of locomotor activity, eclosion behavior, and for the rhythmic component of the male courtship song that originates in the thoracic nervous system. The biological cycle depends on the rhythmic formation and nuclear localization of the TIM-PER complex. Light induces the degradation of TIM, which promotes elimination of PER. Nuclear activity of the heterodimer coordinatively regulates PER and TIM transcription through a negative feedback loop. Behaves as a negative element in circadian transcriptional loop. Does not appear to bind DNA, suggesting indirect transcriptional inhibition. In Drosophila serrata (Fruit fly), this protein is Period circadian protein (per).